The sequence spans 510 residues: NAD(P)H-quinone oxidoreductase subunit 2, chloroplastic (510 aa).

Transmembrane regions (helical) follow at residues 24–44, 59–79, 99–119, 124–144, 149–169, 183–203, 295–315, 323–343, 347–367, 395–415, and 418–438; these read LLLFHGSFIFPECILIFGLIL, WFYFISSTSLVMSITALLFRW, IFQFLILLCSTLCIPLSVEYI, MAITEFLLFVLTATLGGMFLC, LITIFVAPECFSLCSYLLSGY, YLLMGGASSSILVHGFSWLYG, WHLLLEILAILSMILGNLIAI, MLAYSSIGQIGYVIIGIIVGD, GYASMITYMLFYISMNLGTFA, ALSSALCLLSLGGLPPLAGFF, and LYLFWCGWQAGLYFLVSIGLL.

This sequence belongs to the complex I subunit 2 family. As to quaternary structure, NDH is composed of at least 16 different subunits, 5 of which are encoded in the nucleus.

The protein resides in the plastid. The protein localises to the chloroplast thylakoid membrane. It catalyses the reaction a plastoquinone + NADH + (n+1) H(+)(in) = a plastoquinol + NAD(+) + n H(+)(out). It carries out the reaction a plastoquinone + NADPH + (n+1) H(+)(in) = a plastoquinol + NADP(+) + n H(+)(out). Functionally, NDH shuttles electrons from NAD(P)H:plastoquinone, via FMN and iron-sulfur (Fe-S) centers, to quinones in the photosynthetic chain and possibly in a chloroplast respiratory chain. The immediate electron acceptor for the enzyme in this species is believed to be plastoquinone. Couples the redox reaction to proton translocation, and thus conserves the redox energy in a proton gradient. In Asparagus officinalis (Garden asparagus), this protein is NAD(P)H-quinone oxidoreductase subunit 2, chloroplastic.